The following is a 479-amino-acid chain: Ribosomal RNA small subunit methyltransferase F (479 aa).

S-adenosyl-L-methionine-binding positions include 125 to 131 (AAAPGSK), Glu-149, Asp-176, and Asp-194. Cys-247 acts as the Nucleophile in catalysis.

The protein belongs to the class I-like SAM-binding methyltransferase superfamily. RsmB/NOP family.

The protein localises to the cytoplasm. The catalysed reaction is cytidine(1407) in 16S rRNA + S-adenosyl-L-methionine = 5-methylcytidine(1407) in 16S rRNA + S-adenosyl-L-homocysteine + H(+). Functionally, specifically methylates the cytosine at position 1407 (m5C1407) of 16S rRNA. The protein is Ribosomal RNA small subunit methyltransferase F (rsmF) of Escherichia coli (strain K12).